Here is a 329-residue protein sequence, read N- to C-terminus: Flotillin-like protein FloA (329 aa).

Helical transmembrane passes span 6-26 and 27-47; these read FIVIAVIIIVALLILFSFVPI and GLWISALAAGVHVGIGTLVGM.

This sequence belongs to the flotillin-like FloA family. As to quaternary structure, homooligomerizes.

It is found in the cell membrane. The protein resides in the membrane raft. Functionally, found in functional membrane microdomains (FMM) that may be equivalent to eukaryotic membrane rafts. FMMs are highly dynamic and increase in number as cells age. Flotillins are thought to be important factors in membrane fluidity. In Staphylococcus aureus (strain JH1), this protein is Flotillin-like protein FloA.